Here is a 204-residue protein sequence, read N- to C-terminus: Somatotropin (204 aa).

The first 17 residues, Met-1 to Ser-17, serve as a signal peptide directing secretion. At Gln-18 the chain carries Pyrrolidone carboxylic acid. His-36 provides a ligand contact to Zn(2+). A disulfide bond links Cys-69 and Cys-177. A Zn(2+)-binding site is contributed by Glu-186. Cys-194 and Cys-202 are joined by a disulfide.

It belongs to the somatotropin/prolactin family.

The protein resides in the secreted. Its function is as follows. Growth hormone plays an important role in growth control and is involved in the regulation of several anabolic processes. Implicated as an osmoregulatory substance important for seawater adaptation. This chain is Somatotropin (gh), found in Acanthopagrus latus (Yellowfin seabream).